The primary structure comprises 576 residues: uncharacterized protein (576 aa).

Over 1 to 8 the chain is Cytoplasmic; it reads MSLSLGAA. A helical membrane pass occupies residues 9-29; the sequence is IYIALKPIFKIYTIMLVGYLV. The Extracellular portion of the chain corresponds to 30–45; it reads AKFDIVSMENAKGISN. The chain crosses the membrane as a helical span at residues 46–66; sequence MVVNAILPCLTFNKIVSNISW. The Cytoplasmic segment spans residues 67–71; that stretch reads RDIKE. A helical transmembrane segment spans residues 72–92; the sequence is IGVIILSAFILFVLGATGALF. The Extracellular portion of the chain corresponds to 93 to 103; the sequence is TTFATTVPKKF. Residues 104–124 form a helical membrane-spanning segment; that stretch reads FWGLIFAGFFPNISDLPIAYI. Over 125–141 the chain is Cytoplasmic; it reads QSMGNGSIFTAEEADKG. Residues 142 to 162 traverse the membrane as a helical segment; the sequence is VAYSCIFLFIQSFLMMNFGMW. At 163–400 the chain is on the extracellular side; that stretch reads RVVGLDFRDT…FIINCLRPAS (238 aa). Residues 401-421 form a helical membrane-spanning segment; it reads LGAILGIICALIPWVKACFVT. Residues 422–437 lie on the Cytoplasmic side of the membrane; it reads TYVHVHKAPDGEPVLN. A helical transmembrane segment spans residues 438-458; sequence FLMDFTEYIGNACVPLGLLLL. The Extracellular portion of the chain corresponds to 459–476; sequence GGTLARLEIKSLPPGFIK. The chain crosses the membrane as a helical span at residues 477–497; sequence SALLMTCFRLIVIPIIGVLWV. Over 498-512 the chain is Cytoplasmic; that stretch reads NKLYSIDWLDTGIGK. Residues 513–533 form a helical membrane-spanning segment; it reads FDMILTWSMPSATAQVYFTAF. Topologically, residues 534 to 545 are extracellular; that stretch reads YTPACGDHIQMN. Residues 546-566 form a helical membrane-spanning segment; that stretch reads CLSVLFVMQYAILFITVAFVV. At 567-576 the chain is on the cytoplasmic side; that stretch reads TYTLKVDLKV.

The protein belongs to the auxin efflux carrier (TC 2.A.69) family.

It is found in the membrane. This is an uncharacterized protein from Saccharomyces cerevisiae (strain ATCC 204508 / S288c) (Baker's yeast).